The chain runs to 36 residues: Peruvianin-1 (36 aa).

The protein belongs to the germin family. Homohexamer, possibly consisting of a trimer of dimers. Post-translationally, glycosylated.

Its activity is regulated as follows. Inhibited by iodoacetamide and trans-epoxysuccinyl-L-leucylamido(4-guanidino)butane (E-64) but not by phenylmethylsulfonyl fluoride (PMSF), pepstatin-A, ethylenediamine tetra acetic acid (EDTA) or ethylene glycol tetraacetic acid (EGTA). Its function is as follows. Cysteine protease able to degrade azocasein and benzoyl-arginine-beta-naphtylamide (BANA) in vitro. The sequence is that of Peruvianin-1 from Thevetia peruviana (Yellow oleander).